The following is a 142-amino-acid chain: Transcriptional regulator MraZ (142 aa).

SpoVT-AbrB domains follow at residues 5–47 (THTP…PTET) and 76–119 (ASDT…DATE).

Belongs to the MraZ family. In terms of assembly, forms oligomers.

It is found in the cytoplasm. The protein localises to the nucleoid. In Cutibacterium acnes (strain DSM 16379 / KPA171202) (Propionibacterium acnes), this protein is Transcriptional regulator MraZ.